The sequence spans 233 residues: Probable chemoreceptor glutamine deamidase CheD (233 aa).

This sequence belongs to the CheD family.

The enzyme catalyses L-glutaminyl-[protein] + H2O = L-glutamyl-[protein] + NH4(+). Probably deamidates glutamine residues to glutamate on methyl-accepting chemotaxis receptors (MCPs), playing an important role in chemotaxis. This chain is Probable chemoreceptor glutamine deamidase CheD, found in Ralstonia nicotianae (strain ATCC BAA-1114 / GMI1000) (Ralstonia solanacearum).